Consider the following 681-residue polypeptide: MSVNSEKSSSSERPEPQQKAPLVPPPPPPPPPPPLPDPAPPEPEEEILGSDDEEQEDPADYCKGGYHPVKIGDLFNGRYHVIRKLGWGHFSTVWLCWDMQGKRFVAMKVVKSAQHYTETALDEIKLLKCVRESDPSDPNKDMVVQLIDDFKISGMNGIHVCMVFEVLGHHLLKWIIKSNYQGLPVRCVKSIIRQVLQGLDYLHSKCKIIHTDIKPENILMCVDDAYVRRMAAEATEWQKAGAPPPSGSAVSTAPQQKPIGKISKNKKKKLKKKQKRQAELLEKRLQEIEELEREAERKILEENITSAEASGEQDGEYQPEVTLKAADLEDTTEEETAKDNGEVEDQEEKEDAEKENAEKDEDDVEQELANLDPTWVESPKANGHIENGPFSLEQQLEDEEDDEDDCANPEEYNLDEPNAESDYTYSSSYEQFNGELPNGQHKTSEFPTPLFSGPLEPVACGSVISEGSPLTEQEESSPSHDRSRTVSASSTGDLPKTKTRAADLLVNPLDPRNADKIRVKIADLGNACWVHKHFTEDIQTRQYRSIEVLIGAGYSTPADIWSTACMAFELATGDYLFEPHSGEDYSRDEDHIAHIIELLGSIPRHFALSGKYSREFFNRRGELRHITKLKPWSLFDVLVEKYGWPHEDAAQFTDFLIPMLEMVPEKRASAGECLRHPWLNS.

A disordered region spans residues 1–63; the sequence is MSVNSEKSSS…EQEDPADYCK (63 aa). Pro residues predominate over residues 22 to 41; it reads LVPPPPPPPPPPPLPDPAPP. The span at 42–59 shows a compositional bias: acidic residues; sequence EPEEEILGSDDEEQEDPA. Ser-50 carries the phosphoserine modification. Residues 79-681 form the Protein kinase domain; it reads YHVIRKLGWG…ECLRHPWLNS (603 aa). Residues 85-93 and Lys-108 each bind ATP; that span reads LGWGHFSTV. Asp-212 functions as the Proton acceptor in the catalytic mechanism. Disordered regions lie at residues 237-270, 302-452, and 467-499; these read WQKA…KKKL, ENIT…PLFS, and GSPL…KTKT. A phosphothreonine mark is found at Thr-331 and Thr-332. Ser-378 carries the post-translational modification Phosphoserine. The span at 395 to 419 shows a compositional bias: acidic residues; the sequence is QLEDEEDDEDDCANPEEYNLDEPNA. The span at 421 to 431 shows a compositional bias: polar residues; it reads SDYTYSSSYEQ. At Ser-468 the chain carries Phosphoserine. Thr-471 carries the phosphothreonine modification. Ser-477, Ser-479, and Ser-483 each carry phosphoserine. The residue at position 485 (Thr-485) is a Phosphothreonine; by PKB/AKT1. Ser-487 and Ser-490 each carry phosphoserine. Ser-581 carries the phosphoserine; by CK2 modification.

It belongs to the protein kinase superfamily. CMGC Ser/Thr protein kinase family. As to quaternary structure, associates with U4/U6-U5 tri-small nuclear ribonucleoproteins (U4/U6-U5 tri-snRNPs). Interacts with PKB/AKT1 in a phosphorylation-dependent manner. The phosphorylated form (by PKB/AKT1) interacts with YWHAB and YWHAE. Interaction with YWHAB suppresses its cleavage by caspases and inhibits the release of its N-terminal pro-apoptotic fragment. Interacts with SFN. Interacts with ACIN1. Interacts with POLR2A/RNA polymerase II; the interaction occurs during the co-transcriptional formation of inappropriate R-loops. Mg(2+) serves as cofactor. Phosphorylation at Thr-485 by PKB/AKT1 enhances its stimulatory activity in triggering cyclin-D1 (CCND1) expression and promoting apoptosis in neurons, which can be blocked by YWHAB. It also enhances its protein kinase activity toward ACIN1 and SRSF2, promotes its nuclear translocation and prevents its proteolytic cleavage. In terms of processing, proteolytically cleaved at Asp-137 and Asp-401 by caspase-3 during apoptotic cell death. Cleavage at Asp-137 which is the major site of cleavage, produces a small N-terminal fragment that translocates into nucleus and promotes VP16-induced apoptosis. As to expression, expressed in testes, lung and brain.

Its subcellular location is the cytoplasm. It is found in the nucleus. The protein localises to the nucleoplasm. It localises to the nucleus speckle. The protein resides in the chromosome. The catalysed reaction is L-seryl-[protein] + ATP = O-phospho-L-seryl-[protein] + ADP + H(+). The enzyme catalyses L-threonyl-[protein] + ATP = O-phospho-L-threonyl-[protein] + ADP + H(+). Its activity is regulated as follows. Activated by phosphorylation on Ser-50 and Ser-581. Functionally, serine/arginine-rich protein-specific kinase which specifically phosphorylates its substrates at serine residues located in regions rich in arginine/serine dipeptides, known as RS domains and is involved in the phosphorylation of SR splicing factors and the regulation of splicing. Promotes neuronal apoptosis by up-regulating cyclin-D1 (CCND1) expression. This is done by the phosphorylation of SRSF2, leading to the suppression of p53/TP53 phosphorylation thereby relieving the repressive effect of p53/TP53 on cyclin-D1 (CCND1) expression. Phosphorylates ACIN1, and redistributes it from the nuclear speckles to the nucleoplasm, resulting in cyclin A1 but not cyclin A2 up-regulation. Plays an essential role in spliceosomal B complex formation via the phosphorylation of DDX23/PRP28. Probably by phosphorylating DDX23, leads to the suppression of incorrect R-loops formed during transcription; R-loops are composed of a DNA:RNA hybrid and the associated non-template single-stranded DNA. The protein is SRSF protein kinase 2 of Mus musculus (Mouse).